Consider the following 134-residue polypeptide: MKSFNIDHFIASVLQWILNIALIILSIVLSIFLINETITFIQYIFSAKKYTSYKLVESIIVYFLYFEFIALIIKYFKSNYHFPLRYFIYIGITALIRLIIVSHEEPMETLLYAGAILVLVIALYISNMRDLRKE.

4 consecutive transmembrane segments (helical) span residues 14–34, 56–76, 82–102, and 106–126; these read LQWI…IFLI, VESI…IKYF, FPLR…IIVS, and PMET…LYIS.

The protein belongs to the PsiE family.

The protein localises to the cell membrane. The sequence is that of Protein PsiE homolog from Bacillus anthracis.